The primary structure comprises 329 residues: Trem-like transcript 2 protein (329 aa).

A signal peptide spans 1-24 (MEPWPLTFLLLLLLLLWLQGCVSG). The Ig-like V-type domain occupies 25-126 (HSNENLYRKV…HFYPLVGFQL (102 aa)). The Extracellular portion of the chain corresponds to 25–270 (HSNENLYRKV…NRSQETYIPA (246 aa)). 2 disulfide bridges follow: C46-C110 and C61-C68. A disordered region spans residues 202-259 (FIDTSGTVTEPERNTESQPATLSPSNARSFSADPVTTSTMSRHQSSSLSTTGTCHPLT). Polar residues predominate over residues 217-259 (ESQPATLSPSNARSFSADPVTTSTMSRHQSSSLSTTGTCHPLT). N261 is a glycosylation site (N-linked (GlcNAc...) asparagine). A helical transmembrane segment spans residues 271–291 (MVVVLTFLPAPVVLVVAYGFW). Residues 292 to 329 (KKRHMGRYNLGSNYAKPWIHLPEGPETPWKPAWSKITQ) are Cytoplasmic-facing.

Interacts with CD276 and this interaction enhances T-cell activation. In terms of tissue distribution, detected in B-lymphocytes and macrophages. Detected in spleen, lymph nodes, blood, bone marrow and cells from the peritoneal cavity (at protein level).

The protein resides in the cell membrane. Cell surface receptor that may play a role in the innate and adaptive immune response. Acts as a counter-receptor for CD276 and interaction with CD276 on T-cells enhances T-cell activation. In Mus musculus (Mouse), this protein is Trem-like transcript 2 protein (Treml2).